Consider the following 610-residue polypeptide: UvrABC system protein C (610 aa).

Residues 16-94 form the GIY-YIG domain; it reads SQPGVYRMYD…IKLYQPRYNV (79 aa). The UVR domain occupies 204-239; it reads DQVLTQLIARMEKASQDLAFEEAARIRDQIQAVRRV.

It belongs to the UvrC family. Interacts with UvrB in an incision complex.

It localises to the cytoplasm. Functionally, the UvrABC repair system catalyzes the recognition and processing of DNA lesions. UvrC both incises the 5' and 3' sides of the lesion. The N-terminal half is responsible for the 3' incision and the C-terminal half is responsible for the 5' incision. The protein is UvrABC system protein C of Salmonella paratyphi C (strain RKS4594).